The sequence spans 685 residues: Heat shock protein homolog SSE1 (685 aa).

Positions 651 to 685 are disordered; that stretch reads QALRSNQEASKMADLSAKLAAQRKAEAEAKENAKE. Basic and acidic residues predominate over residues 673–685; sequence RKAEAEAKENAKE.

Belongs to the heat shock protein 70 family.

Its subcellular location is the cytoplasm. The sequence is that of Heat shock protein homolog SSE1 (SSE1) from Naumovozyma castellii (Yeast).